Here is a 510-residue protein sequence, read N- to C-terminus: Glycerol kinase (510 aa).

Thr-13 provides a ligand contact to ADP. ATP-binding residues include Thr-13 and Thr-14. Residue Thr-13 coordinates sn-glycerol 3-phosphate. Position 17 (Arg-17) interacts with ADP. Residues Arg-83, Glu-84, Tyr-135, and Asp-255 each contribute to the sn-glycerol 3-phosphate site. The glycerol site is built by Arg-83, Glu-84, Tyr-135, Asp-255, and Gln-256. Thr-277, Gly-321, Gly-421, and Asn-425 together coordinate ADP. 3 residues coordinate ATP: Thr-277, Gly-321, and Gly-421.

It belongs to the FGGY kinase family.

It carries out the reaction glycerol + ATP = sn-glycerol 3-phosphate + ADP + H(+). It functions in the pathway polyol metabolism; glycerol degradation via glycerol kinase pathway; sn-glycerol 3-phosphate from glycerol: step 1/1. Functionally, key enzyme in the regulation of glycerol uptake and metabolism. Catalyzes the phosphorylation of glycerol to yield sn-glycerol 3-phosphate. The polypeptide is Glycerol kinase (Haloquadratum walsbyi (strain DSM 16790 / HBSQ001)).